Reading from the N-terminus, the 793-residue chain is Pleckstrin homology domain-containing family H member 3 (793 aa).

Residues 1 to 18 (MPLPGGLWWLLCCRRGFT) form the signal peptide. Positions 28–62 (ELSGDGDEDEDEETFELRTPSPAGGGRGPLEVTLT) are disordered. Residues 29–41 (LSGDGDEDEDEET) are compositionally biased toward acidic residues. The residue at position 30 (serine 30) is a Phosphoserine. The PH domain occupies 95-199 (DIVVKGWLYR…WGVALREVIA (105 aa)). The MyTH4 domain maps to 237–399 (HTSGALYAPL…PSLAEISALS (163 aa)). The region spanning 404–754 (LLCTVHCPGA…AYLANPSPER (351 aa)) is the FERM domain. Disordered stretches follow at residues 554-586 (VPLP…SAAL) and 598-622 (KRRA…EGGG). Over residues 598 to 608 (KRRAERARRGG) the composition is skewed to basic residues. 2 positions are modified to omega-N-methylarginine: arginine 638 and arginine 642. Residues 750 to 762 (PSPERPCSSSSPP) show a composition bias toward low complexity. A disordered region spans residues 750–793 (PSPERPCSSSSPPCQDLPDTSPPSQRPGLDEPQGQSGCLGQLQD). A compositionally biased stretch (polar residues) spans 782–793 (QGQSGCLGQLQD).

This chain is Pleckstrin homology domain-containing family H member 3 (PLEKHH3), found in Homo sapiens (Human).